The primary structure comprises 393 residues: Putative competence-damage inducible protein (393 aa).

It belongs to the CinA family.

The chain is Putative competence-damage inducible protein from Streptococcus suis (strain 98HAH33).